A 237-amino-acid chain; its full sequence is Phosphoribosylaminoimidazole-succinocarboxamide synthase (237 aa).

The protein belongs to the SAICAR synthetase family.

The catalysed reaction is 5-amino-1-(5-phospho-D-ribosyl)imidazole-4-carboxylate + L-aspartate + ATP = (2S)-2-[5-amino-1-(5-phospho-beta-D-ribosyl)imidazole-4-carboxamido]succinate + ADP + phosphate + 2 H(+). The protein operates within purine metabolism; IMP biosynthesis via de novo pathway; 5-amino-1-(5-phospho-D-ribosyl)imidazole-4-carboxamide from 5-amino-1-(5-phospho-D-ribosyl)imidazole-4-carboxylate: step 1/2. This Alteromonas mediterranea (strain DSM 17117 / CIP 110805 / LMG 28347 / Deep ecotype) protein is Phosphoribosylaminoimidazole-succinocarboxamide synthase.